Here is a 483-residue protein sequence, read N- to C-terminus: Cobyric acid synthase (483 aa).

One can recognise a GATase cobBQ-type domain in the interval 251-438 (ALIVAVPMLP…LHGVFSADRF (188 aa)). Cysteine 333 acts as the Nucleophile in catalysis. Residue histidine 430 is part of the active site.

The protein belongs to the CobB/CobQ family. CobQ subfamily.

Its pathway is cofactor biosynthesis; adenosylcobalamin biosynthesis. Functionally, catalyzes amidations at positions B, D, E, and G on adenosylcobyrinic A,C-diamide. NH(2) groups are provided by glutamine, and one molecule of ATP is hydrogenolyzed for each amidation. The protein is Cobyric acid synthase of Brucella suis (strain ATCC 23445 / NCTC 10510).